The primary structure comprises 193 residues: ATP-dependent Clp protease proteolytic subunit 2 (193 aa).

Residue serine 98 is the Nucleophile of the active site. Histidine 123 is a catalytic residue.

Belongs to the peptidase S14 family. As to quaternary structure, fourteen ClpP subunits assemble into 2 heptameric rings which stack back to back to give a disk-like structure with a central cavity, resembling the structure of eukaryotic proteasomes.

It localises to the cytoplasm. The enzyme catalyses Hydrolysis of proteins to small peptides in the presence of ATP and magnesium. alpha-casein is the usual test substrate. In the absence of ATP, only oligopeptides shorter than five residues are hydrolyzed (such as succinyl-Leu-Tyr-|-NHMec, and Leu-Tyr-Leu-|-Tyr-Trp, in which cleavage of the -Tyr-|-Leu- and -Tyr-|-Trp bonds also occurs).. Cleaves peptides in various proteins in a process that requires ATP hydrolysis. Has a chymotrypsin-like activity. Plays a major role in the degradation of misfolded proteins. This is ATP-dependent Clp protease proteolytic subunit 2 from Bacillus cereus (strain ATCC 14579 / DSM 31 / CCUG 7414 / JCM 2152 / NBRC 15305 / NCIMB 9373 / NCTC 2599 / NRRL B-3711).